Here is a 211-residue protein sequence, read N- to C-terminus: Envelope protein UL45 homolog (211 aa).

The Intravirion segment spans residues Met-1 to Thr-46. A helical; Signal-anchor for type II membrane protein membrane pass occupies residues Ile-47 to Ala-67. Residues Phe-68–Lys-211 are Virion surface-facing. Residues Asn-96 and Asn-133 are each glycosylated (N-linked (GlcNAc...) asparagine; by host).

Belongs to the herpesviridae HHV-1 UL45 family.

It localises to the virion membrane. In Gallid herpesvirus 2 (strain bc-1) (GaHV-2), this protein is Envelope protein UL45 homolog (UL45H).